A 276-amino-acid polypeptide reads, in one-letter code: Adenylate kinase (276 aa).

51-56 is an ATP binding site; sequence GAGKGT. Residues 71–100 form an NMP region; the sequence is ATGDMLRSQVAKKTPLGQAAKKIMDAGGLV. Residues T72, R77, 98-100, 127-130, and Q134 contribute to the AMP site; these read GLV and GFPR. An LID region spans residues 168-205; that stretch reads GRLVHPASGRSYHVKFNPPKKEMTDDITGEPLIQRSDD. Residues R169 and 178 to 179 each bind ATP; that span reads SY. 2 residues coordinate AMP: R202 and R213. Q241 contributes to the ATP binding site.

This sequence belongs to the adenylate kinase family. AK2 subfamily. As to quaternary structure, monomer.

The protein localises to the cytoplasm. It is found in the cytosol. Its subcellular location is the mitochondrion intermembrane space. It carries out the reaction AMP + ATP = 2 ADP. In terms of biological role, catalyzes the reversible transfer of the terminal phosphate group between ATP and AMP. Plays an important role in cellular energy homeostasis and in adenine nucleotide metabolism. Adenylate kinase activity is critical for regulation of the phosphate utilization and the AMP de novo biosynthesis pathways. The sequence is that of Adenylate kinase from Podospora anserina (strain S / ATCC MYA-4624 / DSM 980 / FGSC 10383) (Pleurage anserina).